The sequence spans 73 residues: MAKKDGAIEVEGRVIEPLPNAMFRIELENGHKVLAHISGKMRQHYIRILPEDRVVVELSPYDLSRGRIVYRYK.

Residues 1-73 (MAKKDGAIEV…SRGRIVYRYK (73 aa)) form the S1-like domain.

It belongs to the IF-1 family. Component of the 30S ribosomal translation pre-initiation complex which assembles on the 30S ribosome in the order IF-2 and IF-3, IF-1 and N-formylmethionyl-tRNA(fMet); mRNA recruitment can occur at any time during PIC assembly.

It is found in the cytoplasm. In terms of biological role, one of the essential components for the initiation of protein synthesis. Stabilizes the binding of IF-2 and IF-3 on the 30S subunit to which N-formylmethionyl-tRNA(fMet) subsequently binds. Helps modulate mRNA selection, yielding the 30S pre-initiation complex (PIC). Upon addition of the 50S ribosomal subunit IF-1, IF-2 and IF-3 are released leaving the mature 70S translation initiation complex. This is Translation initiation factor IF-1 from Mycolicibacterium smegmatis (strain ATCC 700084 / mc(2)155) (Mycobacterium smegmatis).